A 635-amino-acid chain; its full sequence is Threonine--tRNA ligase (635 aa).

Residues 1–61 (MVSIRLPDGS…DRDASLAIVT (61 aa)) enclose the TGS domain. Positions 242 to 533 (DHRKLGKQLD…LIEHHAGAMP (292 aa)) are catalytic. Residues Cys-333, His-384, and His-510 each contribute to the Zn(2+) site.

It belongs to the class-II aminoacyl-tRNA synthetase family. As to quaternary structure, homodimer. Requires Zn(2+) as cofactor.

Its subcellular location is the cytoplasm. It catalyses the reaction tRNA(Thr) + L-threonine + ATP = L-threonyl-tRNA(Thr) + AMP + diphosphate + H(+). Its function is as follows. Catalyzes the attachment of threonine to tRNA(Thr) in a two-step reaction: L-threonine is first activated by ATP to form Thr-AMP and then transferred to the acceptor end of tRNA(Thr). Also edits incorrectly charged L-seryl-tRNA(Thr). This chain is Threonine--tRNA ligase, found in Burkholderia pseudomallei (strain 1106a).